The following is a 317-amino-acid chain: L-lactate dehydrogenase (317 aa).

NAD(+)-binding positions include Val-17, Asp-38, Lys-43, Tyr-69, and 83 to 84; that span reads GA. 2 residues coordinate substrate: Gln-86 and Arg-92. NAD(+) contacts are provided by residues Ser-105, 122-124, and Ser-147; that span reads ATN. 124–127 lines the substrate pocket; the sequence is NPVD. Residue 152 to 155 participates in substrate binding; the sequence is DTAR. Beta-D-fructose 1,6-bisphosphate is bound by residues Arg-157 and His-172. His-179 serves as the catalytic Proton acceptor. Phosphotyrosine is present on Tyr-224. Thr-233 contacts substrate.

This sequence belongs to the LDH/MDH superfamily. LDH family. Homotetramer.

It is found in the cytoplasm. It carries out the reaction (S)-lactate + NAD(+) = pyruvate + NADH + H(+). It functions in the pathway fermentation; pyruvate fermentation to lactate; (S)-lactate from pyruvate: step 1/1. Allosterically activated by fructose 1,6-bisphosphate (FBP). In terms of biological role, catalyzes the conversion of lactate to pyruvate. In Bacillus caldolyticus, this protein is L-lactate dehydrogenase.